A 423-amino-acid polypeptide reads, in one-letter code: Lipoyl synthase 1, mitochondrial (423 aa).

C127, C132, C138, C159, C163, C166, and S375 together coordinate [4Fe-4S] cluster. Residues 142–364 (DEEEGTATAT…EEEAMAMGFL (223 aa)) form the Radical SAM core domain.

It belongs to the radical SAM superfamily. Lipoyl synthase family. It depends on [4Fe-4S] cluster as a cofactor.

The protein localises to the mitochondrion. It carries out the reaction [[Fe-S] cluster scaffold protein carrying a second [4Fe-4S](2+) cluster] + N(6)-octanoyl-L-lysyl-[protein] + 2 oxidized [2Fe-2S]-[ferredoxin] + 2 S-adenosyl-L-methionine + 4 H(+) = [[Fe-S] cluster scaffold protein] + N(6)-[(R)-dihydrolipoyl]-L-lysyl-[protein] + 4 Fe(3+) + 2 hydrogen sulfide + 2 5'-deoxyadenosine + 2 L-methionine + 2 reduced [2Fe-2S]-[ferredoxin]. Its pathway is protein modification; protein lipoylation via endogenous pathway; protein N(6)-(lipoyl)lysine from octanoyl-[acyl-carrier-protein]: step 2/2. In terms of biological role, catalyzes the radical-mediated insertion of two sulfur atoms into the C-6 and C-8 positions of the octanoyl moiety bound to the lipoyl domains of lipoate-dependent enzymes, thereby converting the octanoylated domains into lipoylated derivatives. This Trypanosoma cruzi (strain CL Brener) protein is Lipoyl synthase 1, mitochondrial.